The chain runs to 459 residues: Bifunctional protein GlmU (459 aa).

Residues 1-229 (MTNYAIILAA…FDESLGVNDR (229 aa)) are pyrophosphorylase. UDP-N-acetyl-alpha-D-glucosamine-binding positions include 8-11 (LAAG), Lys22, Gln72, and 77-78 (GT). Asp102 is a Mg(2+) binding site. UDP-N-acetyl-alpha-D-glucosamine is bound by residues Gly139, Glu154, Asn169, and Asn227. Position 227 (Asn227) interacts with Mg(2+). The linker stretch occupies residues 230–250 (VALAKAEKVMRRRINHAHMVN). Positions 251 to 459 (GVTLTNPAST…KKKPHHPNNK (209 aa)) are N-acetyltransferase. UDP-N-acetyl-alpha-D-glucosamine contacts are provided by Arg332 and Lys350. His362 acts as the Proton acceptor in catalysis. 2 residues coordinate UDP-N-acetyl-alpha-D-glucosamine: Tyr365 and Asn376. Acetyl-CoA-binding positions include Ala379, 385 to 386 (NY), Ser404, Ala422, and Arg439.

It in the N-terminal section; belongs to the N-acetylglucosamine-1-phosphate uridyltransferase family. This sequence in the C-terminal section; belongs to the transferase hexapeptide repeat family. In terms of assembly, homotrimer. Mg(2+) is required as a cofactor.

The protein localises to the cytoplasm. It catalyses the reaction alpha-D-glucosamine 1-phosphate + acetyl-CoA = N-acetyl-alpha-D-glucosamine 1-phosphate + CoA + H(+). The catalysed reaction is N-acetyl-alpha-D-glucosamine 1-phosphate + UTP + H(+) = UDP-N-acetyl-alpha-D-glucosamine + diphosphate. It functions in the pathway nucleotide-sugar biosynthesis; UDP-N-acetyl-alpha-D-glucosamine biosynthesis; N-acetyl-alpha-D-glucosamine 1-phosphate from alpha-D-glucosamine 6-phosphate (route II): step 2/2. It participates in nucleotide-sugar biosynthesis; UDP-N-acetyl-alpha-D-glucosamine biosynthesis; UDP-N-acetyl-alpha-D-glucosamine from N-acetyl-alpha-D-glucosamine 1-phosphate: step 1/1. The protein operates within bacterial outer membrane biogenesis; LPS lipid A biosynthesis. Catalyzes the last two sequential reactions in the de novo biosynthetic pathway for UDP-N-acetylglucosamine (UDP-GlcNAc). The C-terminal domain catalyzes the transfer of acetyl group from acetyl coenzyme A to glucosamine-1-phosphate (GlcN-1-P) to produce N-acetylglucosamine-1-phosphate (GlcNAc-1-P), which is converted into UDP-GlcNAc by the transfer of uridine 5-monophosphate (from uridine 5-triphosphate), a reaction catalyzed by the N-terminal domain. The protein is Bifunctional protein GlmU of Streptococcus mutans serotype c (strain ATCC 700610 / UA159).